A 461-amino-acid polypeptide reads, in one-letter code: Ribulose bisphosphate carboxylase (461 aa).

Residue Asn-113 participates in substrate binding. The Proton acceptor role is filled by Lys-168. Lys-170 contributes to the substrate binding site. Mg(2+) contacts are provided by Lys-193, Asp-195, and Glu-196. The residue at position 193 (Lys-193) is an N6-carboxylysine. His-289 acts as the Proton acceptor in catalysis. Substrate contacts are provided by Arg-290, His-323, and Ser-370.

It belongs to the RuBisCO large chain family. Type II subfamily. In terms of assembly, homodimer. Mg(2+) serves as cofactor.

The catalysed reaction is 2 (2R)-3-phosphoglycerate + 2 H(+) = D-ribulose 1,5-bisphosphate + CO2 + H2O. It catalyses the reaction D-ribulose 1,5-bisphosphate + O2 = 2-phosphoglycolate + (2R)-3-phosphoglycerate + 2 H(+). Its function is as follows. RuBisCO catalyzes two reactions: the carboxylation of D-ribulose 1,5-bisphosphate, the primary event in carbon dioxide fixation, as well as the oxidative fragmentation of the pentose substrate. Both reactions occur simultaneously and in competition at the same active site. In Thiomonas intermedia (strain K12) (Thiobacillus intermedius), this protein is Ribulose bisphosphate carboxylase.